Reading from the N-terminus, the 70-residue chain is uncharacterized protein (70 aa).

The protein localises to the plastid. This is an uncharacterized protein from Euglena longa (Euglenophycean alga).